The chain runs to 712 residues: MNQSPSLIEQGISQQHLKTLSCANVLTLAYQSLGVIYGDLSTSPLYVYKTTFSGKLSLHEDDEEIFGVFSFIFWTFTLIALFKYVFIVLSADDNGEGGTFALYSLLCRYAKLSILPNHQEMDEKLSTYATGSPGETRQSAAVKSFFEKHPKSQKCLLLFVLLGTCMAIGDSVLTPTISVLSAVSGVKLKIPNLHENYVVIIACIILVAIFSVQRYGTHRVAFIFAPISTAWLLSISSIGVYNTIKWNPRIVSALSPVYMYKFLRSTGVEGWVSLGGVVLSITGVETMFADLGHFSSLSIKVAFSFFVYPCLILAYMGEAAFLSKHHEDIQQSFYKAIPEPVFWPVFIVATFAAVVGSQAVISATFSIISQCCALDCFPRVKIIHTSSKIHGQIYIPEVNWMLMCLCLAVTIGLRDTNMMGHAYGLAVTSVMLVTTCLMTLVMTIVWKQRIITVLAFVVFFGSIELLYFSSCVYKVPEGGWIPILLSLTFMAVMYIWNYGTTKKHEFDVENKVSMDRIVSLGPSIGMVRVPGIGLVYSNLVTGVPAVFGHFVTNLPAFHKILVFVCVKSVQVPYVGEEERFVISRVGPKEYGMFRSVVRYGYRDVPREMYDFESRLVSAIVEFVETEPGLEEEEMSSVRRKKEECMEIMEAKEAGVAYILGHSYAKAKQSSSVLKKLAVNVVFAFMSTNCRGTDVVLNVPHTSLLEVGMVYYV.

The Cytoplasmic portion of the chain corresponds to 1 to 19; the sequence is MNQSPSLIEQGISQQHLKT. A helical transmembrane segment spans residues 20–40; that stretch reads LSCANVLTLAYQSLGVIYGDL. Residues 41–67 lie on the Extracellular side of the membrane; the sequence is STSPLYVYKTTFSGKLSLHEDDEEIFG. Residues 68 to 88 form a helical membrane-spanning segment; the sequence is VFSFIFWTFTLIALFKYVFIV. Over 89–154 the chain is Cytoplasmic; the sequence is LSADDNGEGG…FFEKHPKSQK (66 aa). The chain crosses the membrane as a helical span at residues 155-175; it reads CLLLFVLLGTCMAIGDSVLTP. Topologically, residues 176–189 are extracellular; it reads TISVLSAVSGVKLK. Residues 190 to 210 traverse the membrane as a helical segment; sequence IPNLHENYVVIIACIILVAIF. Topologically, residues 211–219 are cytoplasmic; sequence SVQRYGTHR. The helical transmembrane segment at 220–240 threads the bilayer; the sequence is VAFIFAPISTAWLLSISSIGV. Over 241-267 the chain is Extracellular; that stretch reads YNTIKWNPRIVSALSPVYMYKFLRSTG. Residues 268–288 form a helical membrane-spanning segment; it reads VEGWVSLGGVVLSITGVETMF. Residues 289–300 are Cytoplasmic-facing; it reads ADLGHFSSLSIK. Residues 301–321 traverse the membrane as a helical segment; that stretch reads VAFSFFVYPCLILAYMGEAAF. At 322–340 the chain is on the extracellular side; sequence LSKHHEDIQQSFYKAIPEP. Residues 341–361 traverse the membrane as a helical segment; the sequence is VFWPVFIVATFAAVVGSQAVI. Residues 362–392 are Cytoplasmic-facing; that stretch reads SATFSIISQCCALDCFPRVKIIHTSSKIHGQ. The helical transmembrane segment at 393 to 413 threads the bilayer; it reads IYIPEVNWMLMCLCLAVTIGL. The Extracellular portion of the chain corresponds to 414–424; the sequence is RDTNMMGHAYG. A helical transmembrane segment spans residues 425 to 445; sequence LAVTSVMLVTTCLMTLVMTIV. At 446–449 the chain is on the cytoplasmic side; it reads WKQR. A helical membrane pass occupies residues 450–470; it reads IITVLAFVVFFGSIELLYFSS. At 471–474 the chain is on the extracellular side; the sequence is CVYK. Residues 475–495 form a helical membrane-spanning segment; the sequence is VPEGGWIPILLSLTFMAVMYI. At 496 to 712 the chain is on the cytoplasmic side; the sequence is WNYGTTKKHE…LLEVGMVYYV (217 aa).

Belongs to the HAK/KUP transporter (TC 2.A.72.3) family. As to expression, detected in the whole mature plant but preferentially expressed in roots and stems, and in potassium-starved plants.

It localises to the cell membrane. Its function is as follows. High-affinity potassium transporter that could play a major role in the uptake of potassium from the rhizosphere. May act as a low-affinity potassium transporter under high potassium concentrations. Could also transport rubidium. The polypeptide is Potassium transporter 1 (POT1) (Arabidopsis thaliana (Mouse-ear cress)).